A 488-amino-acid chain; its full sequence is Envelope glycoprotein gp62 (488 aa).

A signal peptide spans 1–20; that stretch reads MGKFLATLILFFQFCPLILS. Over 21–442 the chain is Extracellular; sequence DYSPSCCTLT…LGLSQWAREA (422 aa). Residues asparagine 140 and asparagine 222 are each glycosylated (N-linked (GlcNAc...) asparagine; by host). The short motif at 225-228 is the CXXC element; that stretch reads CIVC. Disulfide bonds link cysteine 225–cysteine 228, cysteine 225–cysteine 401, and cysteine 393–cysteine 400. Asparagine 244 and asparagine 272 each carry an N-linked (GlcNAc...) asparagine; by host glycan. The fusion peptide stretch occupies residues 313 to 333; that stretch reads AVPVAVWLVSALAMGAGMAGG. Coiled-coil stretches lie at residues 341 to 387 and 397 to 429; these read ASGR…LLFW and QEQCCFLNITNSHVSILQERPPLENRVLTGWGL. Residues 376–392 are immunosuppression; that stretch reads AQNRRGLDLLFWEQGGL. The CX6CC motif lies at 393 to 401; it reads CKALQEQCC. Asparagine 404 carries N-linked (GlcNAc...) asparagine; by host glycosylation. The chain crosses the membrane as a helical span at residues 443–463; sequence LQTGITLVALLLLVILAGPCI. The S-palmitoyl cysteine; by host moiety is linked to residue cysteine 462. Topologically, residues 464-488 are cytoplasmic; it reads LRQLRHLPSRVRYPHYSLINPESSL.

As to quaternary structure, the mature envelope protein (Env) consists of a trimer of SU-TM heterodimers attached by a labile interchain disulfide bond. Specific enzymatic cleavages in vivo yield mature proteins. Envelope glycoproteins are synthesized as an inactive precursor that is N-glycosylated and processed likely by host cell furin or by a furin-like protease in the Golgi to yield the mature SU and TM proteins. The cleavage site between SU and TM requires the minimal sequence [KR]-X-[KR]-R. Post-translationally, the CXXC motif is highly conserved across a broad range of retroviral envelope proteins. It is thought to participate in the formation of a labile disulfide bond possibly with the CX6CC motif present in the transmembrane protein. Isomerization of the intersubunit disulfide bond to an SU intrachain disulfide bond is thought to occur upon receptor recognition in order to allow membrane fusion. In terms of processing, the transmembrane protein is palmitoylated.

Its subcellular location is the virion membrane. The protein resides in the host cell membrane. The surface protein (SU) attaches the virus to the host cell by binding to its receptor. This interaction triggers the refolding of the transmembrane protein (TM) and is thought to activate its fusogenic potential by unmasking its fusion peptide. Fusion occurs at the host cell plasma membrane. Functionally, the transmembrane protein (TM) acts as a class I viral fusion protein. Under the current model, the protein has at least 3 conformational states: pre-fusion native state, pre-hairpin intermediate state, and post-fusion hairpin state. During viral and target cell membrane fusion, the coiled coil regions (heptad repeats) assume a trimer-of-hairpins structure, positioning the fusion peptide in close proximity to the C-terminal region of the ectodomain. The formation of this structure appears to drive apposition and subsequent fusion of viral and target cell membranes. Membranes fusion leads to delivery of the nucleocapsid into the cytoplasm. The chain is Envelope glycoprotein gp62 (env) from Human T-cell leukemia virus 1 (isolate Zaire EL subtype B) (HTLV-1).